A 93-amino-acid polypeptide reads, in one-letter code: Putative nuclease p44 (93 aa).

The region spanning R5–D84 is the VRR-NUC domain.

Requires Mg(2+) as cofactor.

Its function is as follows. Nuclease. In Escherichia coli (Bacteriophage APSE-1), this protein is Putative nuclease p44 (44).